The primary structure comprises 187 residues: Elongation factor P (187 aa).

This sequence belongs to the elongation factor P family.

The protein localises to the cytoplasm. It participates in protein biosynthesis; polypeptide chain elongation. Involved in peptide bond synthesis. Stimulates efficient translation and peptide-bond synthesis on native or reconstituted 70S ribosomes in vitro. Probably functions indirectly by altering the affinity of the ribosome for aminoacyl-tRNA, thus increasing their reactivity as acceptors for peptidyl transferase. The polypeptide is Elongation factor P (Roseobacter denitrificans (strain ATCC 33942 / OCh 114) (Erythrobacter sp. (strain OCh 114))).